The chain runs to 613 residues: MPDYRSKTSTQGRNMAGARALWRATGMKDEDFKKPIIAIANSFTQFVPGHVHLKDLGQLVAREIERAGGVAKEFNTIAVDDGIAMGHDGMLYSLPSREIIADAVEYMVNAHCADAIVCISNCDKITPGMLMAALRLNIPVIFVSGGPMEAGKTKLASHGLDLVDAMVIAADSTASDEKVAEYERSACPTCGSCSGMFTANSMNCLTEALGLALPGNGSTLATHSDREQLFLTAGRTIVELCKRYYGENDESVLPRSIANFKAFENAMMLDIAMGGSTNTILHLLAAAQEGEVAFDLRDIDRLSRKVPQLCKVAPNIQKYHMEDVHRAGGIFSILGSLARGGLLHTDLPTVHSRSMEEAIAKWDITQTDDEAVHTFFKAGPAGIPTQTAFSQSTRWETLDDDRENGCIRSFEHAYSQEGGLAVLYGNIALDGCVVKTAGVDESIHVFEGTAKIFESQDSAVRGILADEVKAGDIVIIRYEGPKGGPGMQEMLYPTSYLKSKGLGKACALLTDGRFSGGTSGLSIGHASPEAAAGGAIGLVRDGDKVLIDIPNRSINLLVSDEELAQRRVEQDKKGWKPAEVRPRKVTTALKAYALLATSADKGAVRNKAMLEGL.

A Mg(2+)-binding site is contributed by Asp81. Position 122 (Cys122) interacts with [2Fe-2S] cluster. The Mg(2+) site is built by Asp123 and Lys124. N6-carboxylysine is present on Lys124. Cys193 contributes to the [2Fe-2S] cluster binding site. Glu489 provides a ligand contact to Mg(2+). Ser515 acts as the Proton acceptor in catalysis.

Belongs to the IlvD/Edd family. In terms of assembly, homodimer. It depends on [2Fe-2S] cluster as a cofactor. Requires Mg(2+) as cofactor.

The enzyme catalyses (2R)-2,3-dihydroxy-3-methylbutanoate = 3-methyl-2-oxobutanoate + H2O. The catalysed reaction is (2R,3R)-2,3-dihydroxy-3-methylpentanoate = (S)-3-methyl-2-oxopentanoate + H2O. The protein operates within amino-acid biosynthesis; L-isoleucine biosynthesis; L-isoleucine from 2-oxobutanoate: step 3/4. It participates in amino-acid biosynthesis; L-valine biosynthesis; L-valine from pyruvate: step 3/4. Its function is as follows. Functions in the biosynthesis of branched-chain amino acids. Catalyzes the dehydration of (2R,3R)-2,3-dihydroxy-3-methylpentanoate (2,3-dihydroxy-3-methylvalerate) into 2-oxo-3-methylpentanoate (2-oxo-3-methylvalerate) and of (2R)-2,3-dihydroxy-3-methylbutanoate (2,3-dihydroxyisovalerate) into 2-oxo-3-methylbutanoate (2-oxoisovalerate), the penultimate precursor to L-isoleucine and L-valine, respectively. This chain is Dihydroxy-acid dehydratase, found in Pseudomonas putida (strain ATCC 47054 / DSM 6125 / CFBP 8728 / NCIMB 11950 / KT2440).